The primary structure comprises 354 residues: 3-dehydroquinate synthase (354 aa).

Residues 100–104 (GATGD), 124–125 (TT), lysine 136, lysine 145, and 163–166 (FLKT) each bind NAD(+). Zn(2+) contacts are provided by glutamate 178, histidine 242, and histidine 256.

It belongs to the sugar phosphate cyclases superfamily. Dehydroquinate synthase family. The cofactor is NAD(+). Co(2+) is required as a cofactor. It depends on Zn(2+) as a cofactor.

Its subcellular location is the cytoplasm. The catalysed reaction is 7-phospho-2-dehydro-3-deoxy-D-arabino-heptonate = 3-dehydroquinate + phosphate. It participates in metabolic intermediate biosynthesis; chorismate biosynthesis; chorismate from D-erythrose 4-phosphate and phosphoenolpyruvate: step 2/7. Its function is as follows. Catalyzes the conversion of 3-deoxy-D-arabino-heptulosonate 7-phosphate (DAHP) to dehydroquinate (DHQ). The protein is 3-dehydroquinate synthase of Staphylococcus aureus (strain MSSA476).